Consider the following 459-residue polypeptide: Ribulose bisphosphate carboxylase large chain (459 aa).

The propeptide occupies 1-2 (MS). Pro-3 carries the N-acetylproline modification. Lys-14 bears the N6,N6,N6-trimethyllysine mark. The substrate site is built by Asn-123 and Thr-173. Catalysis depends on Lys-175, which acts as the Proton acceptor. Lys-177 is a substrate binding site. The Mg(2+) site is built by Lys-201, Asp-203, and Glu-204. Lys-201 is modified (N6-carboxylysine). His-294 (proton acceptor) is an active-site residue. Residues Arg-295, His-327, and Ser-379 each contribute to the substrate site.

This sequence belongs to the RuBisCO large chain family. Type I subfamily. In terms of assembly, heterohexadecamer of 8 large chains and 8 small chains; disulfide-linked. The disulfide link is formed within the large subunit homodimers. Requires Mg(2+) as cofactor. The disulfide bond which can form in the large chain dimeric partners within the hexadecamer appears to be associated with oxidative stress and protein turnover.

The protein resides in the plastid. It localises to the chloroplast. It catalyses the reaction 2 (2R)-3-phosphoglycerate + 2 H(+) = D-ribulose 1,5-bisphosphate + CO2 + H2O. It carries out the reaction D-ribulose 1,5-bisphosphate + O2 = 2-phosphoglycolate + (2R)-3-phosphoglycerate + 2 H(+). Its function is as follows. RuBisCO catalyzes two reactions: the carboxylation of D-ribulose 1,5-bisphosphate, the primary event in carbon dioxide fixation, as well as the oxidative fragmentation of the pentose substrate in the photorespiration process. Both reactions occur simultaneously and in competition at the same active site. This Streptopus lanceolatus (Rose twisted stalk) protein is Ribulose bisphosphate carboxylase large chain.